A 354-amino-acid chain; its full sequence is Endo-1,4-beta-xylanase 1 (354 aa).

The 321-residue stretch at 19–339 (SGLDAAMKAA…KPSYTSSLNT (321 aa)) folds into the GH10 domain. Asparagine 117 carries N-linked (GlcNAc...) asparagine glycosylation. The active-site Proton donor is the glutamate 147. Glutamate 261 (nucleophile) is an active-site residue. Cysteines 289 and 295 form a disulfide.

The protein belongs to the glycosyl hydrolase 10 (cellulase F) family.

It localises to the secreted. It carries out the reaction Endohydrolysis of (1-&gt;4)-beta-D-xylosidic linkages in xylans.. Its pathway is glycan degradation; xylan degradation. Endo-1,4-beta-xylanase involved in the hydrolysis of xylan, a major structural heterogeneous polysaccharide found in plant biomass representing the second most abundant polysaccharide in the biosphere, after cellulose. Plays an important role in causing fusarium head blight (FHB) on cereal crops. This chain is Endo-1,4-beta-xylanase 1 (XYL1), found in Gibberella zeae (strain ATCC MYA-4620 / CBS 123657 / FGSC 9075 / NRRL 31084 / PH-1) (Wheat head blight fungus).